Reading from the N-terminus, the 441-residue chain is Hexane cyclase gkaB (441 aa).

The N-terminal stretch at 1 to 25 is a signal peptide; that stretch reads MTKFLAGAAIVLAVAFGSFFSQSST. N-linked (GlcNAc...) asparagine glycosylation is found at asparagine 77, asparagine 153, asparagine 184, and asparagine 308.

This sequence belongs to the Diels-Alderase family.

Its pathway is mycotoxin biosynthesis. Functionally, hexane cyclase; part of the gene cluster that mediates the biosynthesis of GKK1032, fungal natural products containing a macrocyclic para-cyclophane connected to a decahydrofluorene ring system that show potent antitumor activities. Within the pathway, gkaB functions synergistically with gkaX and gkaZ to form the cyclophane. The pathway begins with the PKS-NRPS gkaA which, with the help of the trans-enoyl reductase gkaC, synthesizes the polyketide-tyrosyl acyl thioester product which can be reductively off-loaded by the terminal reductase (R) domain in gkaA. The alpha/beta hydrolase gkaG is then required to catalyze the subsequent Knoevenagel condensation that affords the 3-pyrrolin-2-one ring, whereas the three proteins gkaB, gkaX and gkaZ then function synergistically to form the cyclophane. The chain is Hexane cyclase gkaB from Penicillium citrinum.